The following is a 119-amino-acid chain: Platelet basic protein (119 aa).

The signal sequence occupies residues 1-33; that stretch reads MSLRLGAISSCTTSSPFPVLQVLLPLSLLLTTL. A propeptide spanning residues 34 to 39 is cleaved from the precursor; the sequence is VPATMG. 2 cysteine pairs are disulfide-bonded: cysteine 54–cysteine 80 and cysteine 56–cysteine 96.

The protein resides in the secreted. Chemoattractant factor for neutrophils. The protein is Platelet basic protein (PPBP) of Sus scrofa (Pig).